The following is a 336-amino-acid chain: Glyceraldehyde-3-phosphate dehydrogenase (336 aa).

NAD(+)-binding positions include 12-13 (RI), aspartate 34, arginine 78, and serine 120. Residues 151 to 153 (SCT) and threonine 182 each bind D-glyceraldehyde 3-phosphate. Catalysis depends on cysteine 152, which acts as the Nucleophile. Position 183 (asparagine 183) interacts with NAD(+). D-glyceraldehyde 3-phosphate is bound by residues 211-212 (NG) and arginine 234. Position 316 (asparagine 316) interacts with NAD(+).

This sequence belongs to the glyceraldehyde-3-phosphate dehydrogenase family. Homotetramer.

The protein resides in the cytoplasm. It catalyses the reaction D-glyceraldehyde 3-phosphate + phosphate + NAD(+) = (2R)-3-phospho-glyceroyl phosphate + NADH + H(+). It participates in carbohydrate degradation; glycolysis; pyruvate from D-glyceraldehyde 3-phosphate: step 1/5. Its function is as follows. Catalyzes the oxidative phosphorylation of glyceraldehyde 3-phosphate (G3P) to 1,3-bisphosphoglycerate (BPG) using the cofactor NAD. The first reaction step involves the formation of a hemiacetal intermediate between G3P and a cysteine residue, and this hemiacetal intermediate is then oxidized to a thioester, with concomitant reduction of NAD to NADH. The reduced NADH is then exchanged with the second NAD, and the thioester is attacked by a nucleophilic inorganic phosphate to produce BPG. The polypeptide is Glyceraldehyde-3-phosphate dehydrogenase (gap) (Heyndrickxia coagulans (Weizmannia coagulans)).